The sequence spans 207 residues: Large ribosomal subunit protein uL4 (207 aa).

The disordered stretch occupies residues 50 to 76; it reads AVKNRSAVSGGGRKPWKQKGTGRARQG.

This sequence belongs to the universal ribosomal protein uL4 family. As to quaternary structure, part of the 50S ribosomal subunit.

Functionally, one of the primary rRNA binding proteins, this protein initially binds near the 5'-end of the 23S rRNA. It is important during the early stages of 50S assembly. It makes multiple contacts with different domains of the 23S rRNA in the assembled 50S subunit and ribosome. In terms of biological role, forms part of the polypeptide exit tunnel. This chain is Large ribosomal subunit protein uL4, found in Staphylococcus aureus (strain MRSA252).